We begin with the raw amino-acid sequence, 1002 residues long: Probable transport protein MmpL10 (1002 aa).

Helical transmembrane passes span Met-1–Glu-21, Ile-177–Leu-197, Leu-199–Val-219, Ala-228–Ile-248, Ala-268–Leu-288, Ala-306–Leu-326, Tyr-358–Phe-378, Ile-806–Val-826, Val-835–Gly-855, Val-862–Ala-882, Val-901–Gly-921, and Leu-923–Ile-943.

The protein belongs to the resistance-nodulation-cell division (RND) (TC 2.A.6) family. MmpL subfamily.

The protein localises to the cell membrane. This chain is Probable transport protein MmpL10 (mmpL10), found in Mycobacterium bovis (strain ATCC BAA-935 / AF2122/97).